The primary structure comprises 469 residues: RuvB-like helicase 2 (469 aa).

74–81 (GPPSTGKT) serves as a coordination point for ATP.

Belongs to the RuvB family. In terms of assembly, may form heterododecamers with RVB1. Component of the SWR1 chromatin remodeling complex, the INO80 chromatin remodeling complex, and of the R2TP complex.

It localises to the nucleus. The catalysed reaction is ATP + H2O = ADP + phosphate + H(+). Functionally, DNA helicase which participates in several chromatin remodeling complexes, including the SWR1 and the INO80 complexes. The SWR1 complex mediates the ATP-dependent exchange of histone H2A for the H2A variant HZT1 leading to transcriptional regulation of selected genes by chromatin remodeling. The INO80 complex remodels chromatin by shifting nucleosomes and is involved in DNA repair. Also involved in pre-rRNA processing. This is RuvB-like helicase 2 (RVB2) from Eremothecium gossypii (strain ATCC 10895 / CBS 109.51 / FGSC 9923 / NRRL Y-1056) (Yeast).